The chain runs to 304 residues: N-acetyl-D-glucosamine kinase (304 aa).

Residues 4–11 (GLDIGGTK) and 133–140 (GFGGGFVL) each bind ATP. Positions 157, 178, 180, and 185 each coordinate Zn(2+).

Belongs to the ROK (NagC/XylR) family. NagK subfamily.

The enzyme catalyses N-acetyl-D-glucosamine + ATP = N-acetyl-D-glucosamine 6-phosphate + ADP + H(+). It participates in cell wall biogenesis; peptidoglycan recycling. Its function is as follows. Catalyzes the phosphorylation of N-acetyl-D-glucosamine (GlcNAc) derived from cell-wall degradation, yielding GlcNAc-6-P. The sequence is that of N-acetyl-D-glucosamine kinase from Haemophilus influenzae (strain 86-028NP).